We begin with the raw amino-acid sequence, 437 residues long: MPESRVKDSSLADRGREQLYWAELNMPVLLEIRRRFEKEKPLSGHVIAACLHVTKETGVLVRTLAAGGAEVVLIPSNPLSTQDDVAAALAQEGIHVYAWRGMSEREYYNAIGFALSFNPTITMDDGADLTATIHKIGHGVRDQTIEYVLETAGSLDAAGLFSRIRGGTEETTTGVIRLKALKKSGKLLYPIIAVNESYTKYLFDNRYGTGQSTWDGVMRATNLLIAGKNVVIAGYGWVGRGIAIRARGLGARRVIVVEVDPIRALEAVFDGYEVMPMDKAAEVGDIFITATGNIRAISLGHIFKMKDGAVLANAGHFNVEIDVAGLERVAVAKRRIRPYLEEYTLPNGKRVYLIGEGRLVNLVAAEGHPSEVMDLSFANQALAAEFLAKNKLSVDVYKLPDEIDREVARLKLKTMGIEIEELTEEQRRYISSWELGT.

Residues Thr-54, Asp-125, and Glu-170 each coordinate substrate. 171 to 173 (TTT) is an NAD(+) binding site. Substrate contacts are provided by Lys-200 and Asp-204. Residues Asn-205, 234 to 239 (GYGWVG), Glu-258, Asn-293, 314 to 316 (AGH), and Asn-361 each bind NAD(+).

The protein belongs to the adenosylhomocysteinase family. NAD(+) is required as a cofactor.

It is found in the cytoplasm. The enzyme catalyses S-adenosyl-L-homocysteine + H2O = L-homocysteine + adenosine. It participates in amino-acid biosynthesis; L-homocysteine biosynthesis; L-homocysteine from S-adenosyl-L-homocysteine: step 1/1. Its function is as follows. May play a key role in the regulation of the intracellular concentration of adenosylhomocysteine. The protein is Adenosylhomocysteinase of Pyrobaculum aerophilum (strain ATCC 51768 / DSM 7523 / JCM 9630 / CIP 104966 / NBRC 100827 / IM2).